Here is a 319-residue protein sequence, read N- to C-terminus: MSAVDAAAGAADGAHLAAGTVVGVVGPTAAGKSALSVALAHALDGEVVNADSMQLYRGLDIGTAKLTTDERAGVPHHLLDIWPVTEPASVAEYQRLARAAVDDILARGRVPLLVGGSGLYLRAVLERFEFPGTDPVLRQRLEAELAQAGPAALHERLRAVDPDAAANILPGNGRRIVRALEVVELTGAPFTAALPDPSPYYRSVQVGVDLDTARLDERIALRVDRMWADGLVAETRLLADQGLAEGRTASRALGYQQVLRFLAGELTESEAYQETIRATRRFVRRQRSWFRRDPRITWLDSAGSGLVAEALRVVRPAAR.

26 to 33 provides a ligand contact to ATP; that stretch reads GPTAAGKS. 28 to 33 lines the substrate pocket; the sequence is TAAGKS. The interval 51 to 54 is interaction with substrate tRNA; the sequence is DSMQ.

This sequence belongs to the IPP transferase family. In terms of assembly, monomer. Requires Mg(2+) as cofactor.

The catalysed reaction is adenosine(37) in tRNA + dimethylallyl diphosphate = N(6)-dimethylallyladenosine(37) in tRNA + diphosphate. Functionally, catalyzes the transfer of a dimethylallyl group onto the adenine at position 37 in tRNAs that read codons beginning with uridine, leading to the formation of N6-(dimethylallyl)adenosine (i(6)A). The sequence is that of tRNA dimethylallyltransferase from Salinispora tropica (strain ATCC BAA-916 / DSM 44818 / JCM 13857 / NBRC 105044 / CNB-440).